The primary structure comprises 238 residues: Fatty acid metabolism regulator protein (238 aa).

An HTH gntR-type domain is found at Lys-6 to Phe-74. Positions Glu-34–Gln-53 form a DNA-binding region, H-T-H motif.

Homodimer.

Its subcellular location is the cytoplasm. In terms of biological role, multifunctional regulator of fatty acid metabolism. This is Fatty acid metabolism regulator protein from Shewanella baltica (strain OS185).